The chain runs to 448 residues: Protein W (448 aa).

Disordered stretches follow at residues Lys26–Asp104 and Phe193–Ala406. Composition is skewed to polar residues over residues Tyr28 to Ser37 and Asp77 to Arg96. Acidic residues predominate over residues Ser240–Asp252. Ser257 carries the post-translational modification Phosphoserine; by host. Basic and acidic residues predominate over residues Phe296–Lys317. At Ser350 the chain carries Phosphoserine; by host.

The polypeptide is Protein W (P/V/C) (Hendra virus (isolate Horse/Autralia/Hendra/1994)).